We begin with the raw amino-acid sequence, 486 residues long: ATP synthase subunit beta (486 aa).

Residues 1 to 12 (MTTTAEKTDRPG) show a composition bias toward basic and acidic residues. A disordered region spans residues 1–22 (MTTTAEKTDRPGKPGSSDTSGR). 171 to 178 (GGAGVGKT) provides a ligand contact to ATP.

Belongs to the ATPase alpha/beta chains family. As to quaternary structure, F-type ATPases have 2 components, CF(1) - the catalytic core - and CF(0) - the membrane proton channel. CF(1) has five subunits: alpha(3), beta(3), gamma(1), delta(1), epsilon(1). CF(0) has three main subunits: a(1), b(2) and c(9-12). The alpha and beta chains form an alternating ring which encloses part of the gamma chain. CF(1) is attached to CF(0) by a central stalk formed by the gamma and epsilon chains, while a peripheral stalk is formed by the delta and b chains.

The protein localises to the cell membrane. The enzyme catalyses ATP + H2O + 4 H(+)(in) = ADP + phosphate + 5 H(+)(out). Its function is as follows. Produces ATP from ADP in the presence of a proton gradient across the membrane. The catalytic sites are hosted primarily by the beta subunits. The chain is ATP synthase subunit beta from Mycobacterium tuberculosis (strain ATCC 25177 / H37Ra).